The primary structure comprises 312 residues: MAVYLDFENHIKEIQNEIELALIRGDEDAKEILEKRLDKEVKSIYSNLTDFQKLQLARHPDRPYAMDYIDLILKDKYEVFGDRHYNDDKAIVCFVGKIDNVPVVVIGEEKGRGTKNKLLRNFGMPNPCGYRKALKMAKFAEKFNLPILMLVDTAGAYPGIGAEERGQSEAIAKNLQEFASLKVPTISVIIGEGGSGGALAIAVADKLAMMEYSIFSVISPEGCAAILWDDPSKTEVAIKAMKITPRDLKEAGLIDDIILEPSKGAHRDKFSAANTIKEYFLDALRTIQQDPHFLDNRYQKLMSLGSFVESMN.

The CoA carboxyltransferase C-terminal domain occupies 36-286 (RLDKEVKSIY…KEYFLDALRT (251 aa)).

The protein belongs to the AccA family. In terms of assembly, acetyl-CoA carboxylase is a heterohexamer composed of biotin carboxyl carrier protein (AccB), biotin carboxylase (AccC) and two subunits each of ACCase subunit alpha (AccA) and ACCase subunit beta (AccD).

It localises to the cytoplasm. It catalyses the reaction N(6)-carboxybiotinyl-L-lysyl-[protein] + acetyl-CoA = N(6)-biotinyl-L-lysyl-[protein] + malonyl-CoA. Its pathway is lipid metabolism; malonyl-CoA biosynthesis; malonyl-CoA from acetyl-CoA: step 1/1. Functionally, component of the acetyl coenzyme A carboxylase (ACC) complex. First, biotin carboxylase catalyzes the carboxylation of biotin on its carrier protein (BCCP) and then the CO(2) group is transferred by the carboxyltransferase to acetyl-CoA to form malonyl-CoA. The chain is Acetyl-coenzyme A carboxylase carboxyl transferase subunit alpha from Helicobacter pylori (strain ATCC 700392 / 26695) (Campylobacter pylori).